Consider the following 379-residue polypeptide: UDP-4-amino-4-deoxy-L-arabinose--oxoglutarate aminotransferase (379 aa).

Lysine 183 carries the post-translational modification N6-(pyridoxal phosphate)lysine.

The protein belongs to the DegT/DnrJ/EryC1 family. ArnB subfamily. As to quaternary structure, homodimer. The cofactor is pyridoxal 5'-phosphate.

The enzyme catalyses UDP-4-amino-4-deoxy-beta-L-arabinose + 2-oxoglutarate = UDP-beta-L-threo-pentopyranos-4-ulose + L-glutamate. It participates in nucleotide-sugar biosynthesis; UDP-4-deoxy-4-formamido-beta-L-arabinose biosynthesis; UDP-4-deoxy-4-formamido-beta-L-arabinose from UDP-alpha-D-glucuronate: step 2/3. It functions in the pathway bacterial outer membrane biogenesis; lipopolysaccharide biosynthesis. Functionally, catalyzes the conversion of UDP-4-keto-arabinose (UDP-Ara4O) to UDP-4-amino-4-deoxy-L-arabinose (UDP-L-Ara4N). The modified arabinose is attached to lipid A and is required for resistance to polymyxin and cationic antimicrobial peptides. This is UDP-4-amino-4-deoxy-L-arabinose--oxoglutarate aminotransferase from Pseudomonas fluorescens (strain ATCC BAA-477 / NRRL B-23932 / Pf-5).